Consider the following 353-residue polypeptide: Protein RecA (353 aa).

Residue 75 to 82 coordinates ATP; sequence GPESSGKT.

It belongs to the RecA family.

The protein resides in the cytoplasm. Can catalyze the hydrolysis of ATP in the presence of single-stranded DNA, the ATP-dependent uptake of single-stranded DNA by duplex DNA, and the ATP-dependent hybridization of homologous single-stranded DNAs. It interacts with LexA causing its activation and leading to its autocatalytic cleavage. This Cupriavidus pinatubonensis (strain JMP 134 / LMG 1197) (Cupriavidus necator (strain JMP 134)) protein is Protein RecA.